Reading from the N-terminus, the 610-residue chain is Membrane protein insertase YidC (610 aa).

The chain crosses the membrane as a helical span at residues 7-27; that stretch reads FFITIALSILILALWQVFYLG. The tract at residues 36-82 is disordered; sequence QARIEEQQRQAQQAAQNRQASSSTGDTPQMPANPDSIPGQGDTKAAG. Positions 44-55 are enriched in low complexity; it reads RQAQQAAQNRQA. 5 helical membrane passes run 358–378, 387–407, 458–478, 510–530, and 546–566; these read FDLL…FYLI, NFGV…FPLA, WPVL…YVTI, TVPH…IMFL, and IFTW…AGLV.

Belongs to the OXA1/ALB3/YidC family. Type 1 subfamily. Interacts with the Sec translocase complex via SecD. Specifically interacts with transmembrane segments of nascent integral membrane proteins during membrane integration.

It is found in the cell inner membrane. Its function is as follows. Required for the insertion and/or proper folding and/or complex formation of integral membrane proteins into the membrane. Involved in integration of membrane proteins that insert both dependently and independently of the Sec translocase complex, as well as at least some lipoproteins. Aids folding of multispanning membrane proteins. In Brucella melitensis biotype 1 (strain ATCC 23456 / CCUG 17765 / NCTC 10094 / 16M), this protein is Membrane protein insertase YidC.